Reading from the N-terminus, the 138-residue chain is ATP synthase epsilon chain (138 aa).

Belongs to the ATPase epsilon chain family. In terms of assembly, F-type ATPases have 2 components, CF(1) - the catalytic core - and CF(0) - the membrane proton channel. CF(1) has five subunits: alpha(3), beta(3), gamma(1), delta(1), epsilon(1). CF(0) has four main subunits: a(1), b(1), b'(1) and c(9-12).

It is found in the cellular thylakoid membrane. Produces ATP from ADP in the presence of a proton gradient across the membrane. Its function is as follows. The complex from the organism is particularly stable to disruption and remains functional after 6 hours at 55 degrees Celsius. This Thermosynechococcus vestitus (strain NIES-2133 / IAM M-273 / BP-1) protein is ATP synthase epsilon chain.